Here is a 90-residue protein sequence, read N- to C-terminus: Protein S100-A6 (90 aa).

EF-hand domains are found at residues 12–47 and 48–83; these read LIGI…IGSK and LQDA…LAMI. Ca(2+) contacts are provided by Thr28 and Glu33. The residue at position 40 (Lys40) is an N6-acetyllysine. At Ser46 the chain carries Phosphoserine. The residue at position 47 (Lys47) is an N6-acetyllysine; alternate. Lys47 carries the N6-succinyllysine; alternate modification. Positions 61, 63, 65, 67, and 72 each coordinate Ca(2+).

Belongs to the S-100 family. As to quaternary structure, homodimer; head to tail assembly of 2 subunits. Interacts with CACYBP in a calcium-dependent manner. Interacts with ANXA2 and ANXA11 (via N-terminus). Interacts with SUGT1. Interacts with TP53; has higher affinity for TP53 that is phosphorylated on its N-terminal domain, and lower affinity for TP53 that is phosphorylated on its C-terminal domain. Interacts with tropomyosin. Interacts with FKBP4. Interacts with PPP5C (via TPR repeats); the interaction is calcium-dependent and modulates PPP5C activity. Interacts with TPPP; this interaction inhibits TPPP dimerization.

The protein localises to the nucleus envelope. Its subcellular location is the cytoplasm. It localises to the cell membrane. In terms of biological role, may function as calcium sensor and modulator, contributing to cellular calcium signaling. May function by interacting with other proteins, such as TPR-containing proteins, and indirectly play a role in many physiological processes such as the reorganization of the actin cytoskeleton and in cell motility. Binds 2 calcium ions. Calcium binding is cooperative. This is Protein S100-A6 (S100A6) from Oryctolagus cuniculus (Rabbit).